Consider the following 814-residue polypeptide: Syn-copalyl diphosphate synthase TPS3, chloroplastic (814 aa).

The N-terminal 52 residues, 1-52, are a transit peptide targeting the chloroplast; that stretch reads MCSLSTLSPNFSNAYGSKSVSSTASRFPCWQRSNETWKTQSREVIHWTYVVR. K248 is a substrate binding site. 2 residues coordinate Mg(2+): D386 and D388. The short motif at 386–389 is the DXDD motif element; the sequence is DIDD. K472 is a substrate binding site.

It belongs to the terpene synthase family. Mg(2+) is required as a cofactor. Mostly expressed in trichomes of leaves and fruits.

It localises to the plastid. Its subcellular location is the chloroplast. It carries out the reaction (2E,6E,10E)-geranylgeranyl diphosphate = 9alpha-copalyl diphosphate. It participates in secondary metabolite biosynthesis; terpenoid biosynthesis. Functionally, involved in the biosynthesis of labdane-type diterpenoid including cleroda-dienols, and peregrinol lactones and furan derivatives, dopaminergic diterpenoids that can bind to dopamine receptors in the human pituitary gland, have probably ability to lower prolactin levels, and are used to treat menstrual cycle disorders (e.g. premenstrual syndrome and mastodynia). Terpene synthase that produces syn-copalyl diphosophate from geranylgeranyl diphosphate (GGPP). This chain is Syn-copalyl diphosphate synthase TPS3, chloroplastic, found in Vitex agnus-castus (Chaste tree).